A 376-amino-acid chain; its full sequence is Chaperone protein DnaJ (376 aa).

A J domain is found at 5–70 (DYYEVLGLSK…QKKANYDQFG (66 aa)). The CR-type zinc finger occupies 133–215 (GVEKEISITR…CHGKGTVRKN (83 aa)). Zn(2+) is bound by residues C146, C149, C163, C166, C189, C192, C203, and C206. CXXCXGXG motif repeat units follow at residues 146-153 (CDTCAGSG), 163-170 (CDKCGGTG), 189-196 (CDKCGGSG), and 203-210 (CTTCHGKG).

Belongs to the DnaJ family. As to quaternary structure, homodimer. Zn(2+) is required as a cofactor.

The protein resides in the cytoplasm. Functionally, participates actively in the response to hyperosmotic and heat shock by preventing the aggregation of stress-denatured proteins and by disaggregating proteins, also in an autonomous, DnaK-independent fashion. Unfolded proteins bind initially to DnaJ; upon interaction with the DnaJ-bound protein, DnaK hydrolyzes its bound ATP, resulting in the formation of a stable complex. GrpE releases ADP from DnaK; ATP binding to DnaK triggers the release of the substrate protein, thus completing the reaction cycle. Several rounds of ATP-dependent interactions between DnaJ, DnaK and GrpE are required for fully efficient folding. Also involved, together with DnaK and GrpE, in the DNA replication of plasmids through activation of initiation proteins. The chain is Chaperone protein DnaJ from Clostridium novyi (strain NT).